The primary structure comprises 288 residues: T-lymphocyte activation antigen CD80 (288 aa).

An N-terminal signal peptide occupies residues 1–34; sequence MGHTRRQGTSPSKCPYLNFFQLLVLAGLSHFCSG. Residues 35 to 135 form the Ig-like V-type domain; that stretch reads VIHVTKEVKE…FKREHLAEVT (101 aa). At 35–242 the chain is on the extracellular side; sequence VIHVTKEVKE…TTKQEHFPDN (208 aa). 2 disulfides stabilise this stretch: Cys50-Cys116 and Cys162-Cys216. 8 N-linked (GlcNAc...) asparagine glycosylation sites follow: Asn53, Asn89, Asn98, Asn186, Asn207, Asn211, Asn226, and Asn232. An Ig-like C2-type domain is found at 145–230; the sequence is PSISDFEIPT…GHLRVNQTFN (86 aa). The helical transmembrane segment at 243–263 threads the bilayer; it reads LLPSWAITLISVNGIFVICCL. S-palmitoyl cysteine attachment occurs at residues Cys261, Cys262, Cys266, and Cys271. Topologically, residues 264-288 are cytoplasmic; that stretch reads TYCFAPRCRERRRNERLRRESVRPV. Residue Ser284 is modified to Phosphoserine.

In terms of assembly, homodimer. Interacts with CTLA4; this interaction inhibits T-cell activation. Interacts with PDL1/CD274; this interaction blocks PDL1/PDCD1 binding and thus PDL1/CD274 inhibitory function. Interacts with CD28. As to quaternary structure, (Microbial infection) Interacts with adenovirus subgroup B fiber proteins. (Microbial infection) Interacts with Orthopoxvirus OPG038/M2 protein, inhibiting the interaction with CTLA4/CD152. Post-translationally, palmitoylated by ZDHHC20; palmitoylation protects CD80 from ubiquitin-mediated degradation, regulating the protein stability, and ensures its accurate plasma membrane localization. Expressed on activated B-cells, macrophages and dendritic cells.

It localises to the cell membrane. Functionally, costimulatory molecule that belongs to the immunoglobulin superfamily that plays an important role in T-lymphocyte activation. Acts as the primary auxiliary signal augmenting the MHC/TCR signal in naive T-cells together with the CD28 receptor which is constitutively expressed on the cell surface of T-cells. In turn, activates different signaling pathways such as NF-kappa-B or MAPK leading to the production of different cytokines. In addition, CD28/CD80 costimulatory signal stimulates glucose metabolism and ATP synthesis of T-cells by activating the PI3K/Akt signaling pathway. Also acts as a regulator of PDL1/PDCD1 interactions to limit excess engagement of PDL1 and its inhibitory role in immune responses. Expressed on B-cells, plays a critical role in regulating interactions between B-cells and T-cells in both early and late germinal center responses, which are crucial for the generation of effective humoral immune responses. Its function is as follows. (Microbial infection) Acts as a receptor for adenovirus subgroup B. This Homo sapiens (Human) protein is T-lymphocyte activation antigen CD80 (CD80).